The chain runs to 139 residues: ATP synthase epsilon chain (139 aa).

It belongs to the ATPase epsilon chain family. As to quaternary structure, F-type ATPases have 2 components, CF(1) - the catalytic core - and CF(0) - the membrane proton channel. CF(1) has five subunits: alpha(3), beta(3), gamma(1), delta(1), epsilon(1). CF(0) has three main subunits: a, b and c.

It localises to the cell inner membrane. Produces ATP from ADP in the presence of a proton gradient across the membrane. In Pseudomonas syringae pv. tomato (strain ATCC BAA-871 / DC3000), this protein is ATP synthase epsilon chain.